The sequence spans 344 residues: Methionine import ATP-binding protein MetN (344 aa).

The 240-residue stretch at 2 to 241 (IELKNIGKQF…PTTQLAQQFI (240 aa)) folds into the ABC transporter domain. 38–45 (GASGAGKS) is an ATP binding site.

This sequence belongs to the ABC transporter superfamily. Methionine importer (TC 3.A.1.24) family. In terms of assembly, the complex is composed of two ATP-binding proteins (MetN), two transmembrane proteins (MetI) and a solute-binding protein (MetQ).

Its subcellular location is the cell inner membrane. It catalyses the reaction L-methionine(out) + ATP + H2O = L-methionine(in) + ADP + phosphate + H(+). The enzyme catalyses D-methionine(out) + ATP + H2O = D-methionine(in) + ADP + phosphate + H(+). In terms of biological role, part of the ABC transporter complex MetNIQ involved in methionine import. Responsible for energy coupling to the transport system. This chain is Methionine import ATP-binding protein MetN, found in Haemophilus ducreyi (strain 35000HP / ATCC 700724).